The primary structure comprises 828 residues: Periplasmic nitrate reductase (828 aa).

Positions 1 to 31 (MKLSRRSFMKANAVAAVAAAAGLSVPGVARA) form a signal peptide, tat-type signal. The 57-residue stretch at 39–95 (IKWDKAPCRFCGTGCGVLVGTQQGRVVACQGDPDAPVNRGLNCIKGYFLPKIMYGKD) folds into the 4Fe-4S Mo/W bis-MGD-type domain. Residues Cys46, Cys49, Cys53, and Cys81 each coordinate [4Fe-4S] cluster. Mo-bis(molybdopterin guanine dinucleotide) contacts are provided by residues Lys83, Gln150, Asn175, Cys179, 212-219 (WGANMAEM), 243-247 (STYQH), 262-264 (QSD), Met372, Gln376, Asn482, 508-509 (SD), Lys531, Asp558, and 718-727 (TGRVLEHWHT). Phe794 contributes to the substrate binding site. 2 residues coordinate Mo-bis(molybdopterin guanine dinucleotide): Asn802 and Lys819.

It belongs to the prokaryotic molybdopterin-containing oxidoreductase family. NasA/NapA/NarB subfamily. Component of the periplasmic nitrate reductase NapAB complex composed of NapA and NapB. [4Fe-4S] cluster serves as cofactor. Mo-bis(molybdopterin guanine dinucleotide) is required as a cofactor. In terms of processing, predicted to be exported by the Tat system. The position of the signal peptide cleavage has not been experimentally proven.

Its subcellular location is the periplasm. It carries out the reaction 2 Fe(II)-[cytochrome] + nitrate + 2 H(+) = 2 Fe(III)-[cytochrome] + nitrite + H2O. Its function is as follows. Catalytic subunit of the periplasmic nitrate reductase complex NapAB. Receives electrons from NapB and catalyzes the reduction of nitrate to nitrite. This is Periplasmic nitrate reductase from Shigella boydii serotype 4 (strain Sb227).